A 696-amino-acid chain; its full sequence is Interleukin-1 receptor accessory protein-like 1 (696 aa).

The first 18 residues, 1-18 (MKAPIPHLILLYATFTQS), serve as a signal peptide directing secretion. One can recognise an Ig-like 1 domain in the interval 19–134 (LKVVTKRGSA…YCMKVSISLT (116 aa)). The Extracellular segment spans residues 19–357 (LKVVTKRGSA…LLHKRELMYT (339 aa)). 2 disulfides stabilise this stretch: Cys-31/Cys-126 and Cys-53/Cys-118. Residues Asn-63, Asn-122, and Asn-138 are each glycosylated (N-linked (GlcNAc...) asparagine). Cystine bridges form between Cys-143/Cys-185 and Cys-164/Cys-216. Ig-like domains lie at 143–232 (CYNS…TELT) and 242–350 (PKLL…VLLH). 3 N-linked (GlcNAc...) asparagine glycosylation sites follow: Asn-213, Asn-264, and Asn-331. Cys-267 and Cys-334 are oxidised to a cystine. Residues 358–378 (VELAGGLGAILLLLVCLVTIY) form a helical membrane-spanning segment. The Cytoplasmic segment spans residues 379 to 696 (KCYKIEIMLF…RETSISSVIW (318 aa)). Positions 403-559 (KDYDAYLSYT…KFWKRLQYEM (157 aa)) constitute a TIR domain. Glu-491 is an active-site residue. The segment at 549–644 (SKFWKRLQYE…TGTLPLTSIG (96 aa)) is interaction with NCS1. The segment at 659–680 (GQRPQTKSSREQNPDEAHTNSA) is disordered. The segment covering 666–676 (SSREQNPDEAH) has biased composition (basic and acidic residues).

This sequence belongs to the interleukin-1 receptor family. As to quaternary structure, homodimer. Interacts (calcium-independent) with NCS1/FREQ. Interacts (via the first immunoglobilin domain) with PTPRD (via the second immunoglobilin domain); this interaction is PTPRD-splicing-dependent and induces pre- and post-synaptic differentiation of neurons and is required for IL1RAPL1-mediated synapse formation.

The protein localises to the cell membrane. Its subcellular location is the cytoplasm. It is found in the cell projection. It localises to the axon. The protein resides in the dendrite. The enzyme catalyses NAD(+) + H2O = ADP-D-ribose + nicotinamide + H(+). Its function is as follows. May regulate secretion and presynaptic differentiation through inhibition of the activity of N-type voltage-gated calcium channel. May activate the MAP kinase JNK. Plays a role in neurite outgrowth. During dendritic spine formation can bidirectionally induce pre- and post-synaptic differentiation of neurons by trans-synaptically binding to PTPRD. The polypeptide is Interleukin-1 receptor accessory protein-like 1 (IL1RAPL1) (Pongo pygmaeus (Bornean orangutan)).